A 320-amino-acid chain; its full sequence is MKIVLAIASLLALSAVYARPSSIKTFEEYKKAFNKSYATFEDEEAARKNFLESVKYVQSNGGAINHLSDLSLDEFKNRFLMSAEAFEHLKTQFDLNAETNACSINGNAPAEIDLRQMRTVTPIRMQGGCGSCWAFSGVAATESAYLAYRNQSLDLAEQELVDCASQHGCHGDTIPRGIEYIQHNGVVQESYYRYVAREQSCRRPNAQRFGISNYCQIYPPNVNKIREALAQTHSAIAVIIGIKDLDAFRHYDGRTIIQRDNGYQPNYHAVNIVGYSNAQGVDYWIVRNSWDTNWGDNGYGYFAANIDLMMIEEYPYVVIL.

The N-terminal stretch at 1-18 (MKIVLAIASLLALSAVYA) is a signal peptide. A propeptide spans 19–98 (RPSSIKTFEE…LKTQFDLNAE (80 aa)) (activation peptide). Disulfide bonds link Cys102-Cys215, Cys129-Cys169, and Cys163-Cys201. Cys132 is a catalytic residue. The N-linked (GlcNAc...) asparagine glycan is linked to Asn150. Residues His268 and Asn288 contribute to the active site.

Belongs to the peptidase C1 family. N-glycosylated. N-glycanase treatment does not completely remove carbohydrates, suggesting that the protein contains additional glycosylation sites.

It is found in the secreted. The enzyme catalyses Broad endopeptidase specificity.. In terms of biological role, thiol protease, with a preference for substrates with a large hydrophobic side chain in the P2 position, or with basic residues. The polypeptide is Peptidase 1 (DERP1) (Dermatophagoides pteronyssinus (European house dust mite)).